A 367-amino-acid chain; its full sequence is Voltage-gated potassium channel subunit beta-2 (367 aa).

Ser-9, Ser-14, and Ser-20 each carry phosphoserine. Asymmetric dimethylarginine; alternate is present on Arg-28. Position 28 is an omega-N-methylarginine; alternate (Arg-28). At Ser-31 the chain carries Phosphoserine. Positions 56, 57, 63, and 85 each coordinate NADP(+). The active-site Proton donor/acceptor is Tyr-90. Ser-112 is modified (phosphoserine). At Lys-124 the chain carries N6-acetyllysine. NADP(+)-binding residues include Asn-158, Ser-188, Arg-189, Gln-214, Trp-243, Ser-244, Pro-245, Leu-246, Ala-247, Cys-248, Lys-254, Tyr-262, Arg-264, Gly-323, Ser-325, Gln-329, Glu-332, and Asn-333.

Belongs to the shaker potassium channel beta subunit family. As to quaternary structure, homotetramer. Interaction with tetrameric potassium channel alpha subunits gives rise to a heterooctamer. Identified in potassium channel complexes containing KCNA1, KCNA2, KCNA4, KCNA5, KCNA6, KCNAB1, KCNAB2 and KCND3. Interacts (in unphosphorylated form) with MAPRE1. Forms a ternary complex with SQSTM1 and PRKCZ. Phosphorylated by PRKCZ; may be regulated by incorporation in a complex composed of PRKCZ and SQSTM1. As to expression, detected in the juxtaparanodal region of nodes of Ranvier in myelinated nerve fibers in the spinal cord (at protein level).

It is found in the cytoplasm. The protein localises to the membrane. It localises to the cell membrane. Its subcellular location is the cell projection. The protein resides in the axon. It is found in the synapse. The protein localises to the synaptosome. It localises to the cytoskeleton. It catalyses the reaction hydroxyacetone + NADP(+) = methylglyoxal + NADPH + H(+). The catalysed reaction is (E)-4-oxonon-2-en-1-ol + NADP(+) = (E)-4-oxonon-2-enal + NADPH + H(+). In terms of biological role, regulatory subunit of the voltage-gated potassium (Kv) Shaker channels composed of pore-forming and potassium-conducting alpha subunits and of regulatory beta subunits. The beta-2/KCNAB2 cytoplasmic subunit promotes potassium channel closure via a mechanism that does not involve physical obstruction of the channel pore. Promotes the inactivation of Kv1.4/KCNA4 and Kv1.5/KCNA5 alpha subunit-containing channels. Displays nicotinamide adenine dinucleotide phosphate (NADPH)-dependent aldoketoreductase activity by catalyzing the NADPH-dependent reduction of a wide range of aldehyde and ketone substrates. Substrate specificity includes methylglyoxal, 9,10-phenanthrenequinone, prostaglandin J2, 4-nitrobenzaldehyde, 4-nitroacetophenone and 4-oxo-trans-2-nonenal (in vitro, no physiological substrate identified yet). The binding of oxidized and reduced nucleotide alters Kv channel gating and may contribute to dynamic fine tuning of cell excitability. Contributes to the regulation of nerve signaling, and prevents neuronal hyperexcitability. The protein is Voltage-gated potassium channel subunit beta-2 (KCNAB2) of Bos taurus (Bovine).